Reading from the N-terminus, the 71-residue chain is Virion membrane protein A13 homolog (71 aa).

A helical transmembrane segment spans residues 1–21 (MGIIDTFVITAVTVIIFCLLI). Residues 22-70 (YAAYKRYKCIPSPDDRDKVLKSTLNDDTLFNQTLTPDQVKALHRLVTSS) are Virion surface-facing.

This sequence belongs to the chordopoxvirinae A13 family.

The protein localises to the virion membrane. Its function is as follows. Essential for the encapsidation of DNA into immature virions (IV) and the subsequent maturation of IV into mature virions (MV). In Vertebrata (FPV), this protein is Virion membrane protein A13 homolog.